The sequence spans 146 residues: Large ribosomal subunit protein uL15 (146 aa).

Basic and acidic residues predominate over residues 1-13 (MKLHELKPAEGSR). The tract at residues 1-51 (MKLHELKPAEGSRKVRNRVGRGTSSGNGKTSGRGQKGQKARSGGGVRLGFE) is disordered. Composition is skewed to gly residues over residues 23–35 (TSSG…GRGQ) and 42–51 (SGGGVRLGFE).

It belongs to the universal ribosomal protein uL15 family. As to quaternary structure, part of the 50S ribosomal subunit.

In terms of biological role, binds to the 23S rRNA. This Streptococcus pneumoniae serotype 2 (strain D39 / NCTC 7466) protein is Large ribosomal subunit protein uL15.